The chain runs to 139 residues: MIEGLSHMTFIVRDLERMTRILEGVFDAREVYASDTEQFSLSREKFFLIGDIWVAIMQGEKLAERSYNHIAFKIDDADFDRYAERVGKLGLDMRPPRPRVEGEGRSIYFYDDDNHMFELHTGTLTERLARKAKGLEAAQ.

The VOC domain maps to 4–122 (GLSHMTFIVR…DNHMFELHTG (119 aa)). His7 provides a ligand contact to Mn(2+). Glu44 acts as the Proton acceptor in catalysis. Mn(2+) contacts are provided by His69 and Glu118.

It belongs to the fosfomycin resistance protein family. Homodimer. Mn(2+) serves as cofactor.

The protein localises to the cytoplasm. Its function is as follows. Catalyzes the hydration of fosfomycin. The chain is Fosfomycin resistance protein FosX (fosX) from Mesorhizobium japonicum (strain LMG 29417 / CECT 9101 / MAFF 303099) (Mesorhizobium loti (strain MAFF 303099)).